A 141-amino-acid chain; its full sequence is Hemoglobin subunit alpha-A (141 aa).

Residues 1–141 enclose the Globin domain; it reads VLSASDKTNV…VAKELTAKYR (141 aa). H58 contacts O2. H87 contributes to the heme b binding site.

This sequence belongs to the globin family. As to quaternary structure, heterotetramer of two alpha chains and two beta chains. In terms of tissue distribution, red blood cells.

In terms of biological role, involved in oxygen transport from the lung to the various peripheral tissues. The polypeptide is Hemoglobin subunit alpha-A (HBAA) (Phalacrocorax carbo (Great cormorant)).